Reading from the N-terminus, the 372-residue chain is Glutamate 5-kinase (372 aa).

K14 is a binding site for ATP. Residues S54, D141, and N153 each coordinate substrate. Residues 173–174 (TD) and 215–221 (TGGMITK) each bind ATP. The PUA domain maps to 280 to 358 (AGRLLLDDGA…REIEAALGYI (79 aa)).

Belongs to the glutamate 5-kinase family.

The protein localises to the cytoplasm. It catalyses the reaction L-glutamate + ATP = L-glutamyl 5-phosphate + ADP. It functions in the pathway amino-acid biosynthesis; L-proline biosynthesis; L-glutamate 5-semialdehyde from L-glutamate: step 1/2. In terms of biological role, catalyzes the transfer of a phosphate group to glutamate to form L-glutamate 5-phosphate. The polypeptide is Glutamate 5-kinase (Chromobacterium violaceum (strain ATCC 12472 / DSM 30191 / JCM 1249 / CCUG 213 / NBRC 12614 / NCIMB 9131 / NCTC 9757 / MK)).